A 390-amino-acid chain; its full sequence is Protein arginine N-methyltransferase 1.1 (390 aa).

Positions 1–10 (MTKNSNHDEN) are enriched in basic and acidic residues. Residues 1–59 (MTKNSNHDENEFISFEPNQNTKIRFEDADEDEVAEGSGVAGEETPQDESMFDAGESADT) form a disordered region. The SAM-dependent MTase PRMT-type domain maps to 69 to 390 (ADYYFDSYSH…ISRTQHYKMR (322 aa)). Active-site residues include Glu-181 and Glu-190.

It belongs to the class I-like SAM-binding methyltransferase superfamily. Protein arginine N-methyltransferase family. In terms of assembly, interacts with PRMT12, MBD7 and FIB2.

The protein resides in the nucleus. Its subcellular location is the cytoplasm. The catalysed reaction is L-arginyl-[protein] + 2 S-adenosyl-L-methionine = N(omega),N(omega)-dimethyl-L-arginyl-[protein] + 2 S-adenosyl-L-homocysteine + 2 H(+). Methylates (mono and asymmetric dimethylation) the guanidino nitrogens of arginyl residues present in a glycine and arginine-rich domain. Type I arginine methyltransferase active on both histones and non-histone proteins. Required for leaves and flowers development. Mediates the methylation of MBD7 and MED36A. The sequence is that of Protein arginine N-methyltransferase 1.1 (PRMT11) from Arabidopsis thaliana (Mouse-ear cress).